Reading from the N-terminus, the 499-residue chain is Lysine--tRNA ligase (499 aa).

Residues E403 and E410 each coordinate Mg(2+).

The protein belongs to the class-II aminoacyl-tRNA synthetase family. Homodimer. It depends on Mg(2+) as a cofactor.

The protein resides in the cytoplasm. It carries out the reaction tRNA(Lys) + L-lysine + ATP = L-lysyl-tRNA(Lys) + AMP + diphosphate. In Campylobacter hominis (strain ATCC BAA-381 / DSM 21671 / CCUG 45161 / LMG 19568 / NCTC 13146 / CH001A), this protein is Lysine--tRNA ligase.